The chain runs to 343 residues: Probable F-box protein At1g67455 (343 aa).

The 46-residue stretch at Met1 to Phe46 folds into the F-box domain.

This is Probable F-box protein At1g67455 from Arabidopsis thaliana (Mouse-ear cress).